The following is a 299-amino-acid chain: GTPase Era (299 aa).

One can recognise an Era-type G domain in the interval arginine 8–glutamate 176. The tract at residues glycine 16–serine 23 is G1. Glycine 16 to serine 23 provides a ligand contact to GTP. The segment at glutamine 42–histidine 46 is G2. The interval aspartate 63–glycine 66 is G3. GTP contacts are provided by residues aspartate 63–leucine 67 and asparagine 125–aspartate 128. A G4 region spans residues asparagine 125–aspartate 128. Residues isoleucine 155 to alanine 157 form a G5 region. Residues isoleucine 199–glycine 283 enclose the KH type-2 domain.

This sequence belongs to the TRAFAC class TrmE-Era-EngA-EngB-Septin-like GTPase superfamily. Era GTPase family. Monomer.

Its subcellular location is the cytoplasm. The protein localises to the cell inner membrane. Its function is as follows. An essential GTPase that binds both GDP and GTP, with rapid nucleotide exchange. Plays a role in 16S rRNA processing and 30S ribosomal subunit biogenesis and possibly also in cell cycle regulation and energy metabolism. This Ectopseudomonas mendocina (strain ymp) (Pseudomonas mendocina) protein is GTPase Era.